The primary structure comprises 344 residues: Pre-mRNA polyadenylation factor fip1 (344 aa).

Disordered regions lie at residues 1–99 and 230–344; these read MSNA…LSTA and NYNT…RNRY. Positions 28–38 are enriched in polar residues; sequence VTVSNAKSPEQ. A compositionally biased stretch (acidic residues) spans 39–50; that stretch reads ASEESDDSDIEF. Residues 80-92 are compositionally biased toward basic and acidic residues; sequence QVEKTAVEVKTTE. Positions 243 to 258 are enriched in low complexity; sequence SGAATPNAYVNNNPSS. Over residues 271-301 the composition is skewed to polar residues; that stretch reads NITSSAGMTHAQPTHNPTSSYGNGASTNYNA. Low complexity predominate over residues 302–317; the sequence is SRPPSNHPHSSNYPSS.

Belongs to the FIP1 family.

It localises to the nucleus. Its function is as follows. Pre-mRNA polyadenylation factor that directly interacts with poly(A) polymerase. The chain is Pre-mRNA polyadenylation factor fip1 from Schizosaccharomyces pombe (strain 972 / ATCC 24843) (Fission yeast).